Consider the following 662-residue polypeptide: 3',5'-cyclic-AMP phosphodiesterase, isoform F (662 aa).

Disordered regions lie at residues V79 to G108 and S207 to T245. The segment covering P80–G98 has biased composition (polar residues). In terms of domain architecture, PDEase spans V248 to S577. H324 (proton donor) is an active-site residue. H324–H328 lines the 3',5'-cyclic AMP pocket. Positions 328, 364, 365, and 482 each coordinate a divalent metal cation. The 3',5'-cyclic AMP site is built by D365, D482, and Q533. Positions E599–G616 are enriched in acidic residues. The interval E599–M662 is disordered. The segment covering G617–S634 has biased composition (low complexity). Residues G635 to M646 show a composition bias toward gly residues. The span at G652–M662 shows a compositional bias: polar residues.

The protein belongs to the cyclic nucleotide phosphodiesterase family. PDE4 subfamily. In terms of assembly, monomer. Requires a divalent metal cation as cofactor.

It carries out the reaction 3',5'-cyclic AMP + H2O = AMP + H(+). It participates in purine metabolism; 3',5'-cyclic AMP degradation; AMP from 3',5'-cyclic AMP: step 1/1. In terms of biological role, hydrolyzes the second messenger cAMP, which is a key regulator of many important physiological processes. Vital for female fertility. Required for learning/memory. The sequence is that of 3',5'-cyclic-AMP phosphodiesterase, isoform F from Drosophila melanogaster (Fruit fly).